A 142-amino-acid polypeptide reads, in one-letter code: Hemoglobin subunit alpha-A (142 aa).

Residues 2-142 (VLSANDKTNV…VGNVLTAKYR (141 aa)) enclose the Globin domain. His-59 provides a ligand contact to O2. A heme b-binding site is contributed by His-88.

The protein belongs to the globin family. As to quaternary structure, heterotetramer of two alpha chains and two beta chains. In terms of tissue distribution, red blood cells.

In terms of biological role, involved in oxygen transport from the lung to the various peripheral tissues. The chain is Hemoglobin subunit alpha-A (HBAA) from Accipiter gentilis (Northern goshawk).